The following is a 251-amino-acid chain: Ell1-associated factor 1 (251 aa).

Disordered stretches follow at residues 110 to 187 and 201 to 251; these read SKTV…DMEV and FDQE…EDED. Positions 112 to 123 are enriched in polar residues; that stretch reads TVPSNAITQSDN. Residues 124–135 show a composition bias toward low complexity; the sequence is SQISESKSTSQS. Residues 143 to 157 are compositionally biased toward basic and acidic residues; the sequence is RRKEKELEASKDGKI. Composition is skewed to polar residues over residues 204-220 and 236-251; these read EFNS…TASK and SSAQ…EDED. Serine 247 carries the post-translational modification Phosphoserine.

The protein belongs to the EAF family. Forms a stable heterodimer with ell1. Ell1-eaf1 complex interacts with RNA polymerase II.

It localises to the nucleus. In terms of biological role, activates transcription elongation by RNA polymerase II and pyrophosphorolysis as a complex with ell1. Acts as a transcriptional transactivator of ell1 elongation activities. The chain is Ell1-associated factor 1 (eaf1) from Schizosaccharomyces pombe (strain 972 / ATCC 24843) (Fission yeast).